Here is a 252-residue protein sequence, read N- to C-terminus: Ubiquinone/menaquinone biosynthesis C-methyltransferase UbiE (252 aa).

S-adenosyl-L-methionine-binding positions include T71, D100, 124 to 125, and S141; that span reads DA.

The protein belongs to the class I-like SAM-binding methyltransferase superfamily. MenG/UbiE family.

It carries out the reaction a 2-demethylmenaquinol + S-adenosyl-L-methionine = a menaquinol + S-adenosyl-L-homocysteine + H(+). The catalysed reaction is a 2-methoxy-6-(all-trans-polyprenyl)benzene-1,4-diol + S-adenosyl-L-methionine = a 5-methoxy-2-methyl-3-(all-trans-polyprenyl)benzene-1,4-diol + S-adenosyl-L-homocysteine + H(+). The protein operates within quinol/quinone metabolism; menaquinone biosynthesis; menaquinol from 1,4-dihydroxy-2-naphthoate: step 2/2. It functions in the pathway cofactor biosynthesis; ubiquinone biosynthesis. Its function is as follows. Methyltransferase required for the conversion of demethylmenaquinol (DMKH2) to menaquinol (MKH2) and the conversion of 2-polyprenyl-6-methoxy-1,4-benzoquinol (DDMQH2) to 2-polyprenyl-3-methyl-6-methoxy-1,4-benzoquinol (DMQH2). The protein is Ubiquinone/menaquinone biosynthesis C-methyltransferase UbiE of Caulobacter sp. (strain K31).